A 178-amino-acid chain; its full sequence is 2-C-methyl-D-erythritol 2,4-cyclodiphosphate synthase (178 aa).

Residues Asp-24, His-26, and His-61 each coordinate a divalent metal cation. 24 to 26 (DSH) contacts 4-CDP-2-C-methyl-D-erythritol 2-phosphate. 150 to 153 (TSGE) contacts 4-CDP-2-C-methyl-D-erythritol 2-phosphate.

It belongs to the IspF family. Homotrimer. A divalent metal cation is required as a cofactor.

It catalyses the reaction 4-CDP-2-C-methyl-D-erythritol 2-phosphate = 2-C-methyl-D-erythritol 2,4-cyclic diphosphate + CMP. Its pathway is isoprenoid biosynthesis; isopentenyl diphosphate biosynthesis via DXP pathway; isopentenyl diphosphate from 1-deoxy-D-xylulose 5-phosphate: step 4/6. Its function is as follows. Involved in the biosynthesis of isopentenyl diphosphate (IPP) and dimethylallyl diphosphate (DMAPP), two major building blocks of isoprenoid compounds. Catalyzes the conversion of 4-diphosphocytidyl-2-C-methyl-D-erythritol 2-phosphate (CDP-ME2P) to 2-C-methyl-D-erythritol 2,4-cyclodiphosphate (ME-CPP) with a corresponding release of cytidine 5-monophosphate (CMP). The sequence is that of 2-C-methyl-D-erythritol 2,4-cyclodiphosphate synthase from Chlamydia trachomatis serovar A (strain ATCC VR-571B / DSM 19440 / HAR-13).